We begin with the raw amino-acid sequence, 325 residues long: ATPase ASNA1 homolog 2 (325 aa).

22–29 (KGGVGKTT) contributes to the ATP binding site. The active site involves aspartate 51. ATP contacts are provided by glutamate 231 and asparagine 258. Zn(2+)-binding residues include cysteine 267 and cysteine 270.

It belongs to the arsA ATPase family. As to quaternary structure, homodimer.

Its subcellular location is the cytoplasm. The protein localises to the endoplasmic reticulum. ATPase required for the post-translational delivery of tail-anchored (TA) proteins to the endoplasmic reticulum. Recognizes and selectively binds the transmembrane domain of TA proteins in the cytosol. This complex then targets to the endoplasmic reticulum by membrane-bound receptors, where the tail-anchored protein is released for insertion. This process is regulated by ATP binding and hydrolysis. ATP binding drives the homodimer towards the closed dimer state, facilitating recognition of newly synthesized TA membrane proteins. ATP hydrolysis is required for insertion. Subsequently, the homodimer reverts towards the open dimer state, lowering its affinity for the membrane-bound receptor, and returning it to the cytosol to initiate a new round of targeting. This is ATPase ASNA1 homolog 2 from Paramecium tetraurelia.